Reading from the N-terminus, the 61-residue chain is Large ribosomal subunit protein bL32 (61 aa).

Over residues 1–16 the composition is skewed to basic residues; sequence MAVPRRKTSPSRRGMR. Residues 1–61 form a disordered region; the sequence is MAVPRRKTSP…RQVLKAKSDS (61 aa). Residues 27–44 are compositionally biased toward basic and acidic residues; the sequence is YAEDKDSGELRRPHHLDL.

It belongs to the bacterial ribosomal protein bL32 family.

The protein is Large ribosomal subunit protein bL32 of Nitrobacter winogradskyi (strain ATCC 25391 / DSM 10237 / CIP 104748 / NCIMB 11846 / Nb-255).